We begin with the raw amino-acid sequence, 387 residues long: Beta-alanyl-dopamine/carcinine hydrolase (387 aa).

Belongs to the peptidase C45 family. In terms of assembly, the unprocessed protein forms homodimers. May form heterodimers composed of a 15 kDa alpha subunit and a 30 kDa beta subunit. In terms of processing, the protein is synthesized as a 43 kDa precursor which is then self-processed into a 15 kDa alpha subunit and a 30 kDa beta subunit. Processing appears to be necessary for beta-alanyl-dopamine/carcinine hydrolase activity. The beta subunit carries the beta-alanyl-dopamine/carcinine hydrolase activity. In terms of tissue distribution, expressed in body, head, optic lobes and retina (at protein level). Expressed in photoreceptor cells R1-R6 in the lamina and in photoreceptor cells R7 and R8 in the medulla (at protein level).

The protein localises to the cell projection. Its subcellular location is the axon. It is found in the cytoplasm. The enzyme catalyses carcinine + H2O = histamine + beta-alanine. It catalyses the reaction beta-alanyl-dopamine + H2O = dopamine + beta-alanine. In the cuticle, catalyzes the hydrolysis of beta-alanyl-dopamine releasing dopamine and beta-alanine; dopamine is a metabolite involved in the pigmentation and sclerotization of the insect cuticle. In the photoreceptor cells, catalyzes the hydrolysis of carcinine releasing histamine and beta-alanine contributing to the recycling of the neurotransmitter histamine in the optical nerve system. Also, regulates the cuticular hydrocarbon composition in females. The protein is Beta-alanyl-dopamine/carcinine hydrolase of Drosophila melanogaster (Fruit fly).